A 304-amino-acid polypeptide reads, in one-letter code: Glutaminase (304 aa).

Residues Ser-63, Asn-113, Glu-157, Asn-164, Tyr-188, Tyr-240, and Val-258 each coordinate substrate.

The protein belongs to the glutaminase family. Homotetramer.

It carries out the reaction L-glutamine + H2O = L-glutamate + NH4(+). The protein is Glutaminase of Paraburkholderia phytofirmans (strain DSM 17436 / LMG 22146 / PsJN) (Burkholderia phytofirmans).